The following is a 50-amino-acid chain: Protein PsbN (50 aa).

The chain crosses the membrane as a helical span at residues 14–34 (IAVTILALLLALTGFGLWTAF).

This sequence belongs to the PsbN family.

Its subcellular location is the cellular thylakoid membrane. Functionally, may play a role in photosystem I and II biogenesis. The sequence is that of Protein PsbN from Prochlorococcus marinus (strain MIT 9301).